The sequence spans 279 residues: 30 kDa ribonucleoprotein, chloroplastic (279 aa).

An RRM 1 domain is found at 87–165 (LKIFVGNLLF…RALRVNSGPP (79 aa)). The segment at 156-187 (RALRVNSGPPPEKRENSSFRENSSFRGGSRGG) is disordered. The tract at residues 166 to 193 (PEKRENSSFRENSSFRGGSRGGGSFDSS) is linker (Gly-rich). The RRM 2 domain maps to 194-272 (NRVYVGNLAW…RAIRVSPAEA (79 aa)).

As to expression, expressed at high levels in the leaves and seedlings, and lower levels are seen in the stems and roots.

It localises to the plastid. It is found in the chloroplast. Its function is as follows. Could be involved in splicing and/or processing of chloroplast RNA's. The protein is 30 kDa ribonucleoprotein, chloroplastic of Nicotiana plumbaginifolia (Leadwort-leaved tobacco).